A 227-amino-acid chain; its full sequence is Large ribosomal subunit protein uL1 (227 aa).

It belongs to the universal ribosomal protein uL1 family. Part of the 50S ribosomal subunit.

Binds directly to 23S rRNA. The L1 stalk is quite mobile in the ribosome, and is involved in E site tRNA release. Its function is as follows. Protein L1 is also a translational repressor protein, it controls the translation of the L11 operon by binding to its mRNA. This chain is Large ribosomal subunit protein uL1, found in Mesoplasma florum (strain ATCC 33453 / NBRC 100688 / NCTC 11704 / L1) (Acholeplasma florum).